The chain runs to 224 residues: Cytochrome c oxidase subunit 2 (224 aa).

Over 1-26 (MSTWGQMNLMDPASPIQIEMMLFHDH) the chain is Mitochondrial intermembrane. Residues 27–48 (AMAILIGIFTLVSCLGVKLCFN) traverse the membrane as a helical segment. At 49–62 (TLSTRTMHEAQLLE) the chain is on the mitochondrial matrix side. A helical transmembrane segment spans residues 63 to 82 (TLWTILPAFLLVWLALPSLR). The Mitochondrial intermembrane segment spans residues 83-224 (LLYLLDEQSS…DVKDFINMCN (142 aa)). Cu cation is bound by residues His161, Cys196, Glu198, Cys200, His204, and Met207. Glu198 provides a ligand contact to Mg(2+).

This sequence belongs to the cytochrome c oxidase subunit 2 family. As to quaternary structure, component of the cytochrome c oxidase (complex IV, CIV), a multisubunit enzyme composed of a catalytic core of 3 subunits and several supernumerary subunits. The complex exists as a monomer or a dimer and forms supercomplexes (SCs) in the inner mitochondrial membrane with ubiquinol-cytochrome c oxidoreductase (cytochrome b-c1 complex, complex III, CIII). It depends on Cu cation as a cofactor.

The protein resides in the mitochondrion inner membrane. It carries out the reaction 4 Fe(II)-[cytochrome c] + O2 + 8 H(+)(in) = 4 Fe(III)-[cytochrome c] + 2 H2O + 4 H(+)(out). Functionally, component of the cytochrome c oxidase, the last enzyme in the mitochondrial electron transport chain which drives oxidative phosphorylation. The respiratory chain contains 3 multisubunit complexes succinate dehydrogenase (complex II, CII), ubiquinol-cytochrome c oxidoreductase (cytochrome b-c1 complex, complex III, CIII) and cytochrome c oxidase (complex IV, CIV), that cooperate to transfer electrons derived from NADH and succinate to molecular oxygen, creating an electrochemical gradient over the inner membrane that drives transmembrane transport and the ATP synthase. Cytochrome c oxidase is the component of the respiratory chain that catalyzes the reduction of oxygen to water. Electrons originating from reduced cytochrome c in the intermembrane space (IMS) are transferred via the dinuclear copper A center (CU(A)) of subunit 2 and heme A of subunit 1 to the active site in subunit 1, a binuclear center (BNC) formed by heme A3 and copper B (CU(B)). The BNC reduces molecular oxygen to 2 water molecules using 4 electrons from cytochrome c in the IMS and 4 protons from the mitochondrial matrix. This Albinaria turrita (Door snail) protein is Cytochrome c oxidase subunit 2 (COII).